Consider the following 610-residue polypeptide: Tyrosine-protein kinase Drl (610 aa).

The N-terminal stretch at 1 to 20 is a signal peptide; that stretch reads MAPNLLTIGLLLTLIASGQA. Residues 21 to 242 lie on the Extracellular side of the membrane; it reads HLNIFLNLHE…RENLVPPASG (222 aa). One can recognise a WIF domain in the interval 24 to 155; the sequence is IFLNLHEVLR…NLIFKRKKIC (132 aa). N-linked (GlcNAc...) asparagine glycans are attached at residues asparagine 63, asparagine 99, and asparagine 143. The segment at 202-230 is disordered; the sequence is QAPEKQRPVVTESPVGRGNSGGSKRDFDP. Residues 243–263 form a helical membrane-spanning segment; it reads LVTLIVGGILALVLVSTLILI. At 264–610 the chain is on the cytoplasmic side; sequence AYCAKGPSKR…EFHTQITRYV (347 aa). Residues 343–606 form the Protein kinase domain; sequence VRLSCLVQEG…ICLSEFHTQI (264 aa). Residues 349 to 357 and lysine 371 each bind ATP; that span reads VQEGNFGRI. The Proton acceptor role is filled by aspartate 468. Tyrosine 498 carries the phosphotyrosine; by autocatalysis modification.

This sequence belongs to the protein kinase superfamily. Tyr protein kinase family. In terms of tissue distribution, in the embryonic abdominal hemisegment, expression is restricted to cell body, axon and growth cone of a cluster of 20 ventral nerve cord interneurons. During muscle growth and attachment events in the embryonic abdominal hemisegment, expression is in somatic muscle fibers 21-23 at 10-13 hours and 2 patches of approximately 15 neighboring epidermal cells (dorsal and ventral attachment sites) at 6-13 hours.

It localises to the cell membrane. It catalyses the reaction L-tyrosyl-[protein] + ATP = O-phospho-L-tyrosyl-[protein] + ADP + H(+). Probable coreceptor of Wnt proteins. Involved in neuronal pathway recognition and ventral muscle attachment site selection. Non-vital for development. May be part of a signal transduction cascade involved in learning and possibly memory. This chain is Tyrosine-protein kinase Drl (drl), found in Drosophila melanogaster (Fruit fly).